The primary structure comprises 102 residues: DET1- and DDB1-associated protein 1 (102 aa).

Position 2 is an N-acetylalanine (alanine 2). Phosphoserine is present on serine 33. Composition is skewed to basic and acidic residues over residues 66-75 (KNAAKKRDQE) and 91-102 (ARTDSPDMHEDT). Positions 66 to 102 (KNAAKKRDQEQVELEGESSAPPRKVARTDSPDMHEDT) are disordered. Position 95 is a phosphoserine (serine 95).

Belongs to the DDA1 family. Component of numerous DCX (DDB1-CUL4-X-box) E3 ubiquitin-protein ligase complexes which consist of a core of DDB1, cullin-4 (CUL4A or CUL4B), DDA1 and RBX1. Component of the DCX(DCAF15) complex, also named CLR4(DCAF15) complex, composed of DCAF15, DDB1, cullin-4 (CUL4A or CUL4B), DDA1 and RBX1. Part of the DDD core complex containing DET1, DDA1 and DDB1; the DDD core complex recruits a specific UBE2E enzyme, such as UBE2E1, UBE2E2 UBE2E3, to form specific DDD-E2 complexes.

It participates in protein modification; protein ubiquitination. Its function is as follows. Functions as a component of numerous distinct DCX (DDB1-CUL4-X-box) E3 ubiquitin-protein ligase complexes which mediate the ubiquitination and subsequent proteasomal degradation of target proteins. In the DCX complexes, acts as a scaffolding subunit required to stabilize the complex. In Bos taurus (Bovine), this protein is DET1- and DDB1-associated protein 1.